Here is a 200-residue protein sequence, read N- to C-terminus: Recombination protein RecR (200 aa).

The segment at 58–75 adopts a C4-type zinc-finger fold; that stretch reads CPCCFCLKNFPESQCEFC. The region spanning 82–177 is the Toprim domain; it reads STLCIVASPK…SISRLALGLP (96 aa).

The protein belongs to the RecR family.

In terms of biological role, may play a role in DNA repair. It seems to be involved in an RecBC-independent recombinational process of DNA repair. It may act with RecF and RecO. The protein is Recombination protein RecR of Chlamydia felis (strain Fe/C-56) (Chlamydophila felis).